We begin with the raw amino-acid sequence, 657 residues long: 2',3'-cyclic-nucleotide 2'-phosphodiesterase/3'-nucleotidase (657 aa).

An N-terminal signal peptide occupies residues 1–26; the sequence is MMNRRHFIQISATSILALSANRFAMA. Residues aspartate 41, histidine 43, aspartate 86, asparagine 126, histidine 235, histidine 267, and histidine 269 each contribute to the a divalent metal cation site. Residues tyrosine 450 and 554–559 contribute to the substrate site; that span reads YRAYGN.

Belongs to the 5'-nucleotidase family. A divalent metal cation is required as a cofactor.

The protein resides in the periplasm. It catalyses the reaction a nucleoside 2',3'-cyclic phosphate + H2O = a nucleoside 3'-phosphate + H(+). The catalysed reaction is a ribonucleoside 3'-phosphate + H2O = a ribonucleoside + phosphate. This bifunctional enzyme catalyzes two consecutive reactions during ribonucleic acid degradation. Converts a 2',3'-cyclic nucleotide to a 3'-nucleotide and then the 3'-nucleotide to the corresponding nucleoside and phosphate. The protein is 2',3'-cyclic-nucleotide 2'-phosphodiesterase/3'-nucleotidase (cpdB) of Haemophilus influenzae (strain ATCC 51907 / DSM 11121 / KW20 / Rd).